Here is a 176-residue protein sequence, read N- to C-terminus: Ferritin, middle subunit (176 aa).

The Ferritin-like diiron domain maps to 7-156 (QNYHHDCERA…DHITNLTKMD (150 aa)). 5 residues coordinate Fe cation: glutamate 24, glutamate 59, histidine 62, glutamate 104, and glutamine 138.

It belongs to the ferritin family. As to quaternary structure, oligomer of 24 subunits. There are at least two types of subunits. The functional molecule forms a roughly spherical shell with a diameter of 12 nm and contains a central cavity into which the insoluble mineral iron core is deposited. As to expression, almost exclusively in the gonads.

The catalysed reaction is 4 Fe(2+) + O2 + 4 H(+) = 4 Fe(3+) + 2 H2O. Stores iron in a soluble, non-toxic, readily available form. Important for iron homeostasis. Has ferroxidase activity. Iron is taken up in the ferrous form and deposited as ferric hydroxides after oxidation. This is Ferritin, middle subunit from Salmo salar (Atlantic salmon).